The chain runs to 361 residues: Large ribosomal subunit protein mL45 (361 aa).

The tract at residues 319–361 is disordered; the sequence is EPPKELSAGDAEVKQVDSVGEQSKEQLPLATPVESHTKPSLAI.

Belongs to the mitochondrion-specific ribosomal protein mL45 family.

The protein resides in the mitochondrion. The protein is Large ribosomal subunit protein mL45 (mRpL45) of Drosophila melanogaster (Fruit fly).